The following is a 483-amino-acid chain: ATP-dependent RNA helicase dbp-5 (483 aa).

Residues 1–47 form a disordered region; it reads MADLASRITKPDEAPAAAPEAAPVSAPASEEPKAPENETSIEESQSN. Positions 14 to 29 are enriched in low complexity; the sequence is APAAAPEAAPVSAPAS. Residues 74–102 carry the Q motif motif; the sequence is SSFDELGLPEAVNRGLLAINFKKPSKVQE. One can recognise a Helicase ATP-binding domain in the interval 107–276; it reads LMLSDPPRNM…ERFAPNANQM (170 aa). 120–127 serves as a coordination point for ATP; it reads SQSGTGKT. A DEAD box motif is present at residues 223-226; sequence DEAD. In terms of domain architecture, Helicase C-terminal spans 304–455; the sequence is ILCKLYGLMT…LIQLNPNDLD (152 aa).

It belongs to the DEAD box helicase family. DDX19/DBP5 subfamily. As to quaternary structure, associates with the nuclear pore complex.

The protein localises to the cytoplasm. It is found in the nucleus. The protein resides in the nuclear pore complex. It localises to the nucleus membrane. It carries out the reaction ATP + H2O = ADP + phosphate + H(+). Functionally, ATP-dependent RNA helicase associated with the nuclear pore complex and essential for mRNA export from the nucleus. May participate in a terminal step of mRNA export through the removal of proteins that accompany mRNA through the nucleopore complex. May also be involved in early transcription. This chain is ATP-dependent RNA helicase dbp-5 (dbp-5), found in Neurospora crassa (strain ATCC 24698 / 74-OR23-1A / CBS 708.71 / DSM 1257 / FGSC 987).